The sequence spans 174 residues: Shikimate kinase 2 (174 aa).

Residue 12–17 coordinates ATP; sequence GAGKTT. Positions 16 and 32 each coordinate Mg(2+). Positions 34, 58, and 79 each coordinate substrate. Residues 112-126 are LID domain; the sequence is EEYPQDTQRPTLTGR. Arginine 120 contacts ATP. Arginine 139 is a binding site for substrate.

Belongs to the shikimate kinase family. AroL subfamily. In terms of assembly, monomer. Requires Mg(2+) as cofactor.

The protein resides in the cytoplasm. It carries out the reaction shikimate + ATP = 3-phosphoshikimate + ADP + H(+). It functions in the pathway metabolic intermediate biosynthesis; chorismate biosynthesis; chorismate from D-erythrose 4-phosphate and phosphoenolpyruvate: step 5/7. Catalyzes the specific phosphorylation of the 3-hydroxyl group of shikimic acid using ATP as a cosubstrate. The sequence is that of Shikimate kinase 2 from Serratia proteamaculans (strain 568).